The primary structure comprises 240 residues: MIINAKGPASFAEKYIVRSIWENKFPPGSILPAERELSELIGVTRTTLREVLQRLARDGWLTIQHGKPTRVNNFWETSGLNILETIADLNPEGFPVLVDQLLSARTNVSAIYFRGALRHNPETAVEILARIHGMEDSAEAYAEFDYDLHHTLAFSSGNPLYVLILNGFKGLYSRVGRYYFSSAEARKLAMDFYIELEKLAKRHAYGEVPALMRSYGINSGKMWQKLKDAMPADINQDPHG.

The HTH gntR-type domain maps to 6–74 (KGPASFAEKY…HGKPTRVNNF (69 aa)). The segment at residues 34–53 (ERELSELIGVTRTTLREVLQ) is a DNA-binding region (H-T-H motif).

As to quaternary structure, homodimer.

It is found in the cytoplasm. Multifunctional regulator of fatty acid metabolism. The sequence is that of Fatty acid metabolism regulator protein from Shewanella amazonensis (strain ATCC BAA-1098 / SB2B).